We begin with the raw amino-acid sequence, 320 residues long: NAD kinase (320 aa).

The active-site Proton acceptor is the D96. NAD(+) is bound by residues 96–97 (DG), R101, 170–171 (NE), D200, and 211–216 (TAYAFS).

It belongs to the NAD kinase family. The cofactor is a divalent metal cation.

It is found in the cytoplasm. It catalyses the reaction NAD(+) + ATP = ADP + NADP(+) + H(+). In terms of biological role, involved in the regulation of the intracellular balance of NAD and NADP, and is a key enzyme in the biosynthesis of NADP. Catalyzes specifically the phosphorylation on 2'-hydroxyl of the adenosine moiety of NAD to yield NADP. This is NAD kinase from Rhodococcus opacus (strain B4).